A 66-amino-acid chain; its full sequence is Large ribosomal subunit protein bL35 (66 aa).

The segment covering 1–26 has biased composition (basic residues); that stretch reads MPKMKTHRGAAKRVKRTASGKLKRSR. A disordered region spans residues 1–49; it reads MPKMKTHRGAAKRVKRTASGKLKRSRAFTSHLFANKSTKQKRKLRKASL.

Belongs to the bacterial ribosomal protein bL35 family.

The sequence is that of Large ribosomal subunit protein bL35 from Staphylococcus carnosus (strain TM300).